Consider the following 317-residue polypeptide: DNA repair nuclease/redox regulator APEX1 (317 aa).

A necessary for interaction with YBX1, binding to RNA, association together with NPM1 to rRNA, endoribonuclease activity on abasic RNA and localization in the nucleoli region spans residues 1-32 (MPKRGKRAAAEDGEEPKSEPETKKSKGAAKKT). Residues 1-57 (MPKRGKRAAAEDGEEPKSEPETKKSKGAAKKTEKEAAGEGPVLYEDPPDQKTSASGK) are disordered. Lys-6 carries the post-translational modification N6-acetyllysine; by EP300. A Nuclear localization signal (NLS) motif is present at residues 8 to 12 (AAAED). The span at 15–37 (EPKSEPETKKSKGAAKKTEKEAA) shows a compositional bias: basic and acidic residues. Ser-18 carries the phosphoserine modification. The tract at residues 22–32 (TKKSKGAAKKT) is necessary for interaction with NPM1 and for efficient rRNA binding. Lys-26, Lys-30, Lys-31, and Lys-34 each carry N6-acetyllysine. Ser-53 is subject to Phosphoserine. The short motif at 63 to 79 (ICSWNVDGLRAWIKKKG) is the Nuclear export signal (NES) element. Cys-64 carries the S-nitrosocysteine; alternate modification. Cys-64 and Cys-92 are joined by a disulfide. Asp-69 provides a ligand contact to Mg(2+). Cys-92 bears the S-nitrosocysteine; alternate mark. Glu-95 is a binding site for Mg(2+). Tyr-170 is a catalytic residue. Lys-196 is modified (N6-acetyllysine). 2 residues coordinate Mg(2+): Asp-209 and Asn-211. Asp-209 acts as the Proton donor/acceptor in catalysis. Thr-232 carries the phosphothreonine; by CDK5 modification. The interval 288–317 (HSLLPALCDSKIRSKALGSDHCPITLYLAL) is mitochondrial targeting sequence (MTS). A Mg(2+)-binding site is contributed by Asp-307. At Cys-309 the chain carries S-nitrosocysteine.

The protein belongs to the DNA repair enzymes AP/ExoA family. Monomer. Homodimer; disulfide-linked. Component of the SET complex, composed of at least APEX1, SET, ANP32A, HMGB2, NME1 and TREX1. Associates with the dimer XRCC5/XRCC6 in a DNA-dependent manner. Interacts with SIRT1; the interaction is increased in the context of genotoxic stress. Interacts with HDAC1, HDAC2 and HDAC3; the interactions are not dependent on the APEX1 acetylation status. Interacts with XRCC1; the interaction is induced by SIRT1 and increased with the APEX1 acetylated form. Interacts with NPM1 (via N-terminal domain); the interaction is RNA-dependent and decreases in hydrogen peroxide-damaged cells. Interacts (via N-terminus) with YBX1 (via C-terminus); the interaction is increased in presence of APEX1 acetylated. Interacts with HNRNPL; the interaction is DNA-dependent. Interacts (via N-terminus) with KPNA1 and KPNA2. Interacts with TXN; the interaction stimulates the FOS/JUN AP-1 complex DNA-binding activity in a redox-dependent manner. Interacts with GZMA, KRT8, MDM2, POLB, PRDX6, PRPF19, RPLP0, TOMM20 and WDR77. Binds to CDK5. Requires Mg(2+) as cofactor. The cofactor is Mn(2+). Phosphorylated. Phosphorylation by kinase PKC or casein kinase CK2 results in enhanced redox activity that stimulates binding of the FOS/JUN AP-1 complex to its cognate binding site. AP-endodeoxyribonuclease activity is not affected by CK2-mediated phosphorylation. Phosphorylation of Thr-232 by CDK5 in response to MPP(+)/MPTP (1-methyl-4-phenylpyridinium) reduces AP-endodeoxyribonuclease activity resulting in accumulation of DNA damage and contributing to neuronal death. In terms of processing, acetylated on Lys-6. Acetylation is increased by the transcriptional coactivator EP300 acetyltransferase, genotoxic agents like H(2)O(2) and methyl methanesulfonate (MMS). Acetylation increases its binding affinity to the negative calcium response element (nCaRE) DNA promoter. The acetylated form induces a stronger binding of YBX1 to the Y-box sequence in the MDR1 promoter than the unacetylated form. Deacetylated on lysines. Lys-6 is deacetylated by SIRT1. Post-translationally, cleaved at Lys-30 by granzyme A to create the mitochondrial form; leading in reduction of binding to DNA, AP endodeoxyribonuclease activity, redox activation of transcription factors and to enhanced cell death. Cleaved by granzyme K; leading to intracellular ROS accumulation and enhanced cell death after oxidative stress. Cys-64 and Cys-92 are nitrosylated in response to nitric oxide (NO) and lead to the exposure of the nuclear export signal (NES). In terms of processing, ubiquitinated by MDM2; leading to translocation to the cytoplasm and proteasomal degradation.

It localises to the nucleus. The protein resides in the nucleolus. Its subcellular location is the nucleus speckle. The protein localises to the endoplasmic reticulum. It is found in the cytoplasm. It localises to the mitochondrion. The catalysed reaction is a deoxyribonucleotide-2'-deoxyribose-5'-monophosphate-DNA + H2O = a 5'-end 2'-deoxyribose-5'-monophosphate-DNA + a 3'-end 2'-deoxyribonucleotide-DNA + H(+). It carries out the reaction Exonucleolytic cleavage in the 3'- to 5'-direction to yield nucleoside 5'-phosphates.. The enzyme catalyses a 3'-end 2'-deoxyribonucleotide-3'-phosphoglycolate-DNA + H2O = 2-phosphoglycolate + a 3'-end 2'-deoxyribonucleotide-DNA + H(+). It catalyses the reaction a 3'-end 2'-deoxyribonucleotide-8-oxoguanine-DNA + H2O = 8-oxo-dGMP + a 3'-end 2'-deoxyribonucleotide-DNA + H(+). With respect to regulation, NPM1 stimulates endodeoxyribonuclease activity on double-stranded DNA with AP sites, but inhibits endoribonuclease activity on single-stranded RNA containing AP sites. Functionally, multifunctional protein that plays a central role in the cellular response to oxidative stress. The two major activities of APEX1 are DNA repair and redox regulation of transcriptional factors. Functions as an apurinic/apyrimidinic (AP) endodeoxyribonuclease in the base excision repair (BER) pathway of DNA lesions induced by oxidative and alkylating agents. Initiates repair of AP sites in DNA by catalyzing hydrolytic incision of the phosphodiester backbone immediately adjacent to the damage, generating a single-strand break with 5'-deoxyribose phosphate and 3'-hydroxyl ends. Also incises at AP sites in the DNA strand of DNA/RNA hybrids, single-stranded DNA regions of R-loop structures, and single-stranded RNA molecules. Operates at switch sites of immunoglobulin (Ig) constant regions where it mediates Ig isotype class switch recombination. Processes AP sites induced by successive action of AICDA and UNG. Generates staggered nicks in opposite DNA strands resulting in the formation of double-strand DNA breaks that are finally resolved via non-homologous end joining repair pathway. Has 3'-5' exodeoxyribonuclease activity on mismatched deoxyribonucleotides at the 3' termini of nicked or gapped DNA molecules during short-patch BER. Possesses DNA 3' phosphodiesterase activity capable of removing lesions (such as phosphoglycolate and 8-oxoguanine) blocking the 3' side of DNA strand breaks. Also acts as an endoribonuclease involved in the control of single-stranded RNA metabolism. Plays a role in regulating MYC mRNA turnover by preferentially cleaving in between UA and CA dinucleotides of the MYC coding region determinant (CRD). In association with NMD1, plays a role in the rRNA quality control process during cell cycle progression. Acts as a loading factor for POLB onto non-incised AP sites in DNA and stimulates the 5'-terminal deoxyribose 5'-phosphate (dRp) excision activity of POLB. Exerts reversible nuclear redox activity to regulate DNA binding affinity and transcriptional activity of transcriptional factors by controlling the redox status of their DNA-binding domain, such as the FOS/JUN AP-1 complex after exposure to IR. Involved in calcium-dependent down-regulation of parathyroid hormone (PTH) expression by binding to negative calcium response elements (nCaREs). Together with HNRNPL or the dimer XRCC5/XRCC6, associates with nCaRE, acting as an activator of transcriptional repression. May also play a role in the epigenetic regulation of gene expression by participating in DNA demethylation. Stimulates the YBX1-mediated MDR1 promoter activity, when acetylated at Lys-6 and Lys-7, leading to drug resistance. Plays a role in protection from granzyme-mediated cellular repair leading to cell death. Binds DNA and RNA. Associates, together with YBX1, on the MDR1 promoter. Together with NPM1, associates with rRNA. This is DNA repair nuclease/redox regulator APEX1 (Apex1) from Rattus norvegicus (Rat).